The primary structure comprises 326 residues: Ribonuclease H2 subunit A (326 aa).

The segment at 1–47 (MKDDHDAWEPEELVSDNNSSENELQEDQNSSITFLPPSVNKSNPAKS) is disordered. Over residues 15-47 (SDNNSSENELQEDQNSSITFLPPSVNKSNPAKS) the composition is skewed to polar residues. The 224-residue stretch at 63 to 286 (PYRLGVDEAG…AKDLLELPSK (224 aa)) folds into the RNase H type-2 domain. The a divalent metal cation site is built by aspartate 69, glutamate 70, and aspartate 180.

The protein belongs to the RNase HII family. Eukaryotic subfamily. It depends on Mn(2+) as a cofactor. Mg(2+) serves as cofactor.

It catalyses the reaction Endonucleolytic cleavage to 5'-phosphomonoester.. Functionally, endonuclease that specifically degrades the RNA of RNA-DNA hybrids. Participates in DNA replication. The polypeptide is Ribonuclease H2 subunit A (rnh201) (Schizosaccharomyces pombe (strain 972 / ATCC 24843) (Fission yeast)).